Consider the following 310-residue polypeptide: E3 ubiquitin-protein ligase CSU1 (310 aa).

The RING-type 1; degenerate zinc-finger motif lies at 43–67 (CSLCLKPFIDPMCCHKGHVFCRECI). Residues 75–95 (KKDIQRRLAAHSSQKKQDKDE) are a coiled coil. The segment at 110-138 (EFDQQNHSAMPRNSDKNHNEDKNGFHGAN) is disordered. The segment covering 122–133 (NSDKNHNEDKNG) has biased composition (basic and acidic residues). An RING-type 2 zinc finger spans residues 221 to 263 (CPSCKVTLTNTMSLVALSSCGHVFCKKCAEKFMPVDKVCLVCD).

This sequence belongs to the NOSIP family.

Its subcellular location is the nucleus. The protein localises to the nucleus speckle. It carries out the reaction S-ubiquitinyl-[E2 ubiquitin-conjugating enzyme]-L-cysteine + [acceptor protein]-L-lysine = [E2 ubiquitin-conjugating enzyme]-L-cysteine + N(6)-ubiquitinyl-[acceptor protein]-L-lysine.. It participates in protein modification; protein ubiquitination. RING-finger E3 ubiquitin-protein ligase that plays an major role in maintaining COP1 homeostasis in darkness. Negatively regulates COP1 protein accumulation by targeting COP1 for ubiquitination and subsequent proteasomal degradation in dark-grown seedlings. Negatively regulates the accumulation of SPA1 protein in the dark. The sequence is that of E3 ubiquitin-protein ligase CSU1 from Arabidopsis thaliana (Mouse-ear cress).